A 360-amino-acid polypeptide reads, in one-letter code: AA9 family lytic polysaccharide monooxygenase A (360 aa).

The first 19 residues, 1 to 19 (MKTSFGLLALAAAAKLVNA), serve as a signal peptide directing secretion. Cu(2+) contacts are provided by His-20 and His-102. Cys-62 and Cys-183 are disulfide-bonded. His-169 lines the O2 pocket. Tyr-180 contributes to the Cu(2+) binding site. Positions 254–293 (TSAASASSTKAPATTAAPVQTESAKPATSTTQAAAPTTLV) are disordered. Residues 322-358 (GVVKMYAQCGGMNYSGSTTCESGLTCKQWNPYYHQCV) enclose the CBM1 domain. Asn-334 is a glycosylation site (N-linked (GlcNAc...) asparagine).

This sequence belongs to the polysaccharide monooxygenase AA9 family. Requires Cu(2+) as cofactor.

It is found in the secreted. The enzyme catalyses [(1-&gt;4)-beta-D-glucosyl]n+m + reduced acceptor + O2 = 4-dehydro-beta-D-glucosyl-[(1-&gt;4)-beta-D-glucosyl]n-1 + [(1-&gt;4)-beta-D-glucosyl]m + acceptor + H2O.. In terms of biological role, lytic polysaccharide monooxygenase (LPMO) that depolymerizes crystalline and amorphous polysaccharides via the oxidation of scissile alpha- or beta-(1-4)-glycosidic bonds, yielding C4 oxidation products. Catalysis by LPMOs requires the reduction of the active-site copper from Cu(II) to Cu(I) by a reducing agent and H(2)O(2) or O(2) as a cosubstrate. The sequence is that of AA9 family lytic polysaccharide monooxygenase A (eglD) from Aspergillus terreus (strain NIH 2624 / FGSC A1156).